The following is a 148-amino-acid chain: Probable DNA-directed RNA polymerases I, II, and III subunit RPABC3 (148 aa).

Residues 16–40 (DPDGKKFDRVSRYFCDAESFKMELI) form a non-specific ssDNA binding region.

It belongs to the eukaryotic RPB8 RNA polymerase subunit family. In terms of assembly, component of the RNA polymerase I (Pol I), RNA polymerase II (Pol II) and RNA polymerase III (Pol III) complexes consisting of at least 13, 12 and 17 subunits, respectively. Directly interacts with POLR2A.

It localises to the nucleus. Functionally, DNA-dependent RNA polymerase catalyzes the transcription of DNA into RNA using the four ribonucleoside triphosphates as substrates. Common component of RNA polymerases I, II and III which synthesize ribosomal RNA precursors, mRNA precursors and many functional non-coding RNAs, and small RNAs, such as 5S rRNA and tRNAs, respectively. This is Probable DNA-directed RNA polymerases I, II, and III subunit RPABC3 (rpb-8) from Caenorhabditis elegans.